An 806-amino-acid chain; its full sequence is ATP-dependent zinc metalloprotease FTSH 9, chloroplastic (806 aa).

Residues 1–62 (MTSIELLSPL…SSIQLPQSVP (62 aa)) constitute a chloroplast transit peptide. A disordered region spans residues 84–116 (SSRTIVNCQEGDQKASSSEGEGKTNKDKGRKQG). 2 consecutive transmembrane segments (helical) span residues 133-153 (IIQA…MFVV) and 271-291 (GGFF…AGLL). Residue 369 to 376 (GLPGTGKT) coordinates ATP. His594 contacts Zn(2+). Glu595 is an active-site residue. His598 and Asp677 together coordinate Zn(2+).

It in the N-terminal section; belongs to the AAA ATPase family. In the C-terminal section; belongs to the peptidase M41 family. It depends on Zn(2+) as a cofactor.

It localises to the plastid. The protein resides in the chloroplast thylakoid membrane. In terms of biological role, probable ATP-dependent zinc metallopeptidase. The sequence is that of ATP-dependent zinc metalloprotease FTSH 9, chloroplastic (FTSH9) from Arabidopsis thaliana (Mouse-ear cress).